The primary structure comprises 225 residues: Small ribosomal subunit protein uS7 (225 aa).

S2 is modified (N-acetylserine). The residue at position 27 (T27) is a Phosphothreonine. Residues K45 and K203 each participate in a glycyl lysine isopeptide (Lys-Gly) (interchain with G-Cter in ubiquitin) cross-link.

This sequence belongs to the universal ribosomal protein uS7 family. In terms of assembly, component of the small ribosomal subunit (SSU). Mature yeast ribosomes consist of a small (40S) and a large (60S) subunit. The 40S small subunit contains 1 molecule of ribosomal RNA (18S rRNA) and 33 different proteins (encoded by 57 genes). The large 60S subunit contains 3 rRNA molecules (25S, 5.8S and 5S rRNA) and 46 different proteins (encoded by 81 genes). N-terminally acetylated by acetyltransferase NatA.

The protein localises to the cytoplasm. Component of the ribosome, a large ribonucleoprotein complex responsible for the synthesis of proteins in the cell. The small ribosomal subunit (SSU) binds messenger RNAs (mRNAs) and translates the encoded message by selecting cognate aminoacyl-transfer RNA (tRNA) molecules. The large subunit (LSU) contains the ribosomal catalytic site termed the peptidyl transferase center (PTC), which catalyzes the formation of peptide bonds, thereby polymerizing the amino acids delivered by tRNAs into a polypeptide chain. The nascent polypeptides leave the ribosome through a tunnel in the LSU and interact with protein factors that function in enzymatic processing, targeting, and the membrane insertion of nascent chains at the exit of the ribosomal tunnel. The polypeptide is Small ribosomal subunit protein uS7 (Saccharomyces cerevisiae (strain ATCC 204508 / S288c) (Baker's yeast)).